A 1348-amino-acid chain; its full sequence is Vascular endothelial growth factor receptor 2 (1348 aa).

Residues 1-20 form the signal peptide; the sequence is MELGPLRVLTVLLCLAPVFA. The Extracellular portion of the chain corresponds to 21-756; that stretch reads GLFISMDQPT…GAEEKTNLEL (736 aa). N-linked (GlcNAc...) asparagine glycans are attached at residues asparagine 43, asparagine 47, asparagine 63, asparagine 93, asparagine 138, asparagine 153, asparagine 201, asparagine 240, asparagine 290, asparagine 310, asparagine 365, asparagine 386, asparagine 513, asparagine 556, asparagine 603, asparagine 613, asparagine 622, asparagine 666, asparagine 688, and asparagine 710. Ig-like C2-type domains follow at residues 43 to 106, 138 to 202, 220 to 312, 320 to 405, 412 to 534, 540 to 651, and 658 to 744; these read NDTL…GDSQ, NKTV…IDNE, DLTM…KNSS, PFIH…HTFT, PQIG…RVIS, GLEI…KHLT, and PRLV…AFFS. Cysteine 50 and cysteine 100 form a disulfide bridge. Cysteine 145 and cysteine 195 form a disulfide bridge. Cysteine 241 and cysteine 299 form a disulfide bridge. Cysteine 436 and cysteine 520 are joined by a disulfide. An intrachain disulfide couples cysteine 561 to cysteine 633. A disulfide bond links cysteine 679 and cysteine 728. A helical membrane pass occupies residues 757 to 777; sequence IILVGTAVIAMFFWLLLVIIL. The Cytoplasmic segment spans residues 778-1348; it reads RTVKRANGGD…SPAPVASLPL (571 aa). A Protein kinase domain is found at 825-1155; that stretch reads LKLGKPLGRG…FSELVEHLGN (331 aa). Residues 831 to 839 and lysine 859 each bind ATP; that span reads LGRGAFGQV. The segment covering 958 to 967 has biased composition (low complexity); that stretch reads ITSSQSSTSS. A disordered region spans residues 958 to 983; it reads ITSSQSSTSSGFVEERSLSDVEEEDA. Aspartate 1021 acts as the Proton acceptor in catalysis. Phosphotyrosine; by autocatalysis occurs at positions 1047, 1052, 1168, and 1207. The interval 1280–1302 is disordered; the sequence is PSKSNESVMSEASNQTSGYQSGY.

The protein belongs to the protein kinase superfamily. Tyr protein kinase family. CSF-1/PDGF receptor subfamily. Post-translationally, autophosphorylated on tyrosine residues upon ligand binding. Autophosphorylation occurs in trans, i.e. one subunit of the dimeric receptor phosphorylates tyrosine residues on the other subunit. In terms of tissue distribution, in all endothelial tissues during onset of vascularization. In later development, present in lung, heart, intestine and skin.

The protein resides in the cell membrane. It is found in the cytoplasmic vesicle. It localises to the early endosome. The protein localises to the cell junction. Its subcellular location is the endoplasmic reticulum. It carries out the reaction L-tyrosyl-[protein] + ATP = O-phospho-L-tyrosyl-[protein] + ADP + H(+). Present in an inactive conformation in the absence of bound ligand. Binding of VEGFA, VEGFC or VEGFD leads to dimerization and activation by autophosphorylation on tyrosine residues. Functionally, tyrosine-protein kinase that acts as a cell-surface receptor for VEGFA, VEGFC and/or VEGFD and plays an essential role in the regulation of angiogenesis and vascular development. Promotes proliferation, survival, migration and differentiation of endothelial cells. Promotes reorganization of the actin cytoskeleton. Binding of vascular growth factors leads to the activation of several signaling cascades. Activation of PLCG1 leads to the production of the cellular signaling molecules diacylglycerol and inositol 1,4,5-trisphosphate and the activation of protein kinase C. Mediates activation of MAPK1/ERK2, MAPK3/ERK1 and the MAP kinase signaling pathway, as well as of the AKT1 signaling pathway. Mediates phosphorylation of PIK3R1, the regulatory subunit of phosphatidylinositol 3-kinase, reorganization of the actin cytoskeleton and activation of PTK2/FAK1. Required for VEGFA-mediated induction of NOS2 and NOS3, leading to the production of the signaling molecule nitric oxide (NO) by endothelial cells. This chain is Vascular endothelial growth factor receptor 2, found in Coturnix japonica (Japanese quail).